The primary structure comprises 141 residues: Hemoglobin subunit alpha-A (141 aa).

The region spanning 1-141 (VLSGSDKTNV…VGNVLTAKYR (141 aa)) is the Globin domain. His-58 lines the O2 pocket. His-87 contacts heme b.

This sequence belongs to the globin family. In terms of assembly, heterotetramer of two alpha chains and two beta chains. In terms of tissue distribution, red blood cells.

Functionally, involved in oxygen transport from the lung to the various peripheral tissues. The polypeptide is Hemoglobin subunit alpha-A (HBAA) (Vultur gryphus (Andean condor)).